The chain runs to 617 residues: MTMGALGVVYGDIGTSPLYALKEAAKAAAHGATVTPDAVLGVASLILWALLLIISLKYALLILRADNRGEGGIVALLALLHARNAQPGTWRSHLLVVGLVGAALLYGDGAITPAISVLSAIEGLKVDAPSLAPAVVPVTVVILVGLFMMQKQGTGFIGRIFGPVMLAWFAVLAALGIHGIVKAPAVLAALSPLYAVEFLIHQDFHVSFAILGAAFLAVTGGEAMYADMGHFGRLPIRLAWFAICLPALVLNYFGQAALLITDPAMIENPFFQLCPDALHYPLVAFSAVATVIASQAIISGVFSLTQQSIQLGFLPRMQIRHTTSDAIGQIYVPLVNWLLAAATLGAVLSFGSSDALAGAYGIAVSLLMAITTLLAALVAIQWGYSPWLVVAVNGAFFVIDVIFFSANSIKLFEGGWFPLLLAALVAFMMLTWRSGVKLVEAARAKLRQPEEDLIETAVNKCSARLPGTAVFLASAPRGVPLALTQFVKHNRVLHERVLLVTVLIEESPHIPDEERAEVIEIIPGITRVILHYGFMQNPTIFDGLTLTCRQGKLPGIDLSDITYYVGRETIIPREDVPGMWVWREGLFAFLQRNAERSAAFFGVPTKQVVEFGTELEI.

11 helical membrane-spanning segments follow: residues V42 to I62, L95 to I115, P129 to M149, I160 to I180, V206 to A226, W240 to I260, L282 to F302, I330 to F350, Y360 to I380, P386 to A406, and L411 to T431.

Belongs to the HAK/KUP transporter (TC 2.A.72) family.

Its subcellular location is the cell inner membrane. It catalyses the reaction K(+)(in) + H(+)(in) = K(+)(out) + H(+)(out). In terms of biological role, transport of potassium into the cell. Likely operates as a K(+):H(+) symporter. The protein is Probable potassium transport system protein Kup 3 of Bradyrhizobium diazoefficiens (strain JCM 10833 / BCRC 13528 / IAM 13628 / NBRC 14792 / USDA 110).